Consider the following 100-residue polypeptide: Urease subunit gamma (100 aa).

This sequence belongs to the urease gamma subunit family. In terms of assembly, heterotrimer of UreA (gamma), UreB (beta) and UreC (alpha) subunits. Three heterotrimers associate to form the active enzyme.

It is found in the cytoplasm. The enzyme catalyses urea + 2 H2O + H(+) = hydrogencarbonate + 2 NH4(+). Its pathway is nitrogen metabolism; urea degradation; CO(2) and NH(3) from urea (urease route): step 1/1. This Rhizobium meliloti (strain 1021) (Ensifer meliloti) protein is Urease subunit gamma.